A 156-amino-acid polypeptide reads, in one-letter code: Ribosomal RNA large subunit methyltransferase H (156 aa).

S-adenosyl-L-methionine-binding positions include Leu-73, Gly-104, and 123 to 128 (VSSLTL).

Belongs to the RNA methyltransferase RlmH family. As to quaternary structure, homodimer.

It localises to the cytoplasm. The catalysed reaction is pseudouridine(1915) in 23S rRNA + S-adenosyl-L-methionine = N(3)-methylpseudouridine(1915) in 23S rRNA + S-adenosyl-L-homocysteine + H(+). Functionally, specifically methylates the pseudouridine at position 1915 (m3Psi1915) in 23S rRNA. In Burkholderia thailandensis (strain ATCC 700388 / DSM 13276 / CCUG 48851 / CIP 106301 / E264), this protein is Ribosomal RNA large subunit methyltransferase H.